Here is a 435-residue protein sequence, read N- to C-terminus: MSGFLEELLGEKLVTGGGEEVDVHSLGARGISLLGLYFGCSLSAPCAQLSASLAAFYGRLRGDAAAGPGPGAGAGAAAEPEPRRRLEIVFVSSDQDQRQWQDFVRDMPWLALPYKEKHRKLKLWNKYRISNIPSLIFLDATTGKVVCRNGLLVIRDDPEGLEFPWGPKPFREVIAGPLLRNNGQSLESSSLEGSHVGVYFSAHWCPPCRSLTRVLVESYRKIKEAGQNFEIIFVSADRSEESFKQYFSEMPWLAVPYTDEARRSRLNRLYGIQGIPTLIMLDPQGEVITRQGRVEVLNDEDCREFPWHPKPVLELSDSNAAQLNEGPCLVLFVDSEDDGESEAAKQLIQPIAEKIIAKYKAKEEEAPLLFFVAGEDDMTDSLRDYTNLPEAAPLLTILDMSARAKYVMDVEEITPAIVEAFVNDFLAEKLKPEPI.

Ser-2 carries the N-acetylserine modification. In terms of domain architecture, Thioredoxin spans Pro-167–Ala-321.

This sequence belongs to the nucleoredoxin family. In terms of assembly, associates with the phosphatase 2A holoenzyme. Interacts with PPP2CA; the interaction is direct. Interacts with DVL1 (via PDZ domain); the interaction is direct and regulated by oxidative stress.

Its subcellular location is the cytoplasm. The protein resides in the cytosol. The protein localises to the nucleus. The enzyme catalyses [protein]-dithiol + NAD(+) = [protein]-disulfide + NADH + H(+). It catalyses the reaction [protein]-dithiol + NADP(+) = [protein]-disulfide + NADPH + H(+). Functionally, functions as a redox-dependent negative regulator of the Wnt signaling pathway, possibly by preventing ubiquitination of DVL3 by the BCR(KLHL12) complex. May also function as a transcriptional regulator act as a regulator of protein phosphatase 2A (PP2A). The protein is Nucleoredoxin (NXN) of Homo sapiens (Human).